The following is a 592-amino-acid chain: Tegument protein US23 (592 aa).

Residues 407 to 491 are disordered; that stretch reads PRSLGDGEEE…NNVVPNVERR (85 aa). Over residues 460-481 the composition is skewed to acidic residues; it reads ADDEEQGEDDDDSGAEPMEPEE.

It belongs to the herpesviridae US22 family.

It is found in the virion tegument. In Homo sapiens (Human), this protein is Tegument protein US23 (US23).